The sequence spans 505 residues: Lysine--tRNA ligase (505 aa).

The Mg(2+) site is built by E415 and E422.

Belongs to the class-II aminoacyl-tRNA synthetase family. In terms of assembly, homodimer. Mg(2+) is required as a cofactor.

It localises to the cytoplasm. It carries out the reaction tRNA(Lys) + L-lysine + ATP = L-lysyl-tRNA(Lys) + AMP + diphosphate. This chain is Lysine--tRNA ligase (lysS), found in Escherichia coli (strain K12).